The primary structure comprises 384 residues: Actin-binding Rho-activating protein (384 aa).

The span at 1–11 (MARGEKGRGEG) shows a compositional bias: basic and acidic residues. 3 disordered regions span residues 1 to 20 (MARG…LRKV), 32 to 159 (GWQQ…SPTR), and 181 to 211 (EQEE…EQDG). Positions 35–47 (QWANENSTRQAQE) are enriched in polar residues. Residues 134-145 (DGDEPEPEQPES) show a composition bias toward acidic residues. Residues serine 156 and serine 191 each carry the phosphoserine modification. Actin-binding regions lie at residues 202–302 (ETEE…AERA) and 303–384 (KRAE…TLLK). 2 interaction with actin regions span residues 243–288 (SQVG…GDEG) and 355–384 (MRAR…TLLK).

In terms of assembly, binds F-actin and ABLIM1, ABLIM2 and ABLIM3. Interaction with ABLIM2 and ABLIM3 enhances activity. In terms of tissue distribution, specifically expressed in heart and skeletal muscles.

Its subcellular location is the cytoplasm. The protein resides in the myofibril. It is found in the sarcomere. It localises to the cytoskeleton. Functionally, acts as an activator of serum response factor (SRF)-dependent transcription possibly by inducing nuclear translocation of MKL1 or MKL2 and through a mechanism requiring Rho-actin signaling. The polypeptide is Actin-binding Rho-activating protein (ABRA) (Sus scrofa (Pig)).